A 555-amino-acid polypeptide reads, in one-letter code: Potassium-transporting ATPase potassium-binding subunit (555 aa).

10 helical membrane passes run 2-22 (IWVA…PTGI), 60-80 (QYAL…YFIF), 130-150 (IGIT…VMAF), 173-193 (VFLP…VPQT), 246-266 (MSNI…PFTY), 278-298 (ILFV…TTSE), 374-394 (AGFV…GLMV), 412-432 (LIAV…ALAL), 483-503 (LVMF…AASL), and 525-545 (GIFI…MLVL).

This sequence belongs to the KdpA family. In terms of assembly, the system is composed of three essential subunits: KdpA, KdpB and KdpC.

It is found in the cell membrane. Part of the high-affinity ATP-driven potassium transport (or Kdp) system, which catalyzes the hydrolysis of ATP coupled with the electrogenic transport of potassium into the cytoplasm. This subunit binds the extracellular potassium ions and delivers the ions to the membrane domain of KdpB through an intramembrane tunnel. The chain is Potassium-transporting ATPase potassium-binding subunit from Bacillus cereus (strain ZK / E33L).